We begin with the raw amino-acid sequence, 35 residues long: Potassium channel toxin alpha-KTx 23.2 (35 aa).

3 cysteine pairs are disulfide-bonded: C6-C26, C12-C31, and C16-C33.

Belongs to the short scorpion toxin superfamily. Potassium channel inhibitor family. Alpha-KTx 23 subfamily. Expressed by the venom gland.

It localises to the secreted. Its function is as follows. Selectively and irreversibly binds (K(d)=2.9 pM) and blocks Kv1.3/KCNA3 potassium channels of human T-lymphocytes. Weakly blocks Kv1.2/KCNA2 (9%). The protein is Potassium channel toxin alpha-KTx 23.2 of Vaejovis mexicanus smithi (Mexican scorpion).